Consider the following 156-residue polypeptide: Small ribosomal subunit protein uS7 (156 aa).

This sequence belongs to the universal ribosomal protein uS7 family. Part of the 30S ribosomal subunit. Contacts proteins S9 and S11.

Its function is as follows. One of the primary rRNA binding proteins, it binds directly to 16S rRNA where it nucleates assembly of the head domain of the 30S subunit. Is located at the subunit interface close to the decoding center, probably blocks exit of the E-site tRNA. The sequence is that of Small ribosomal subunit protein uS7 from Phytoplasma mali (strain AT).